We begin with the raw amino-acid sequence, 754 residues long: 1,4-alpha-glucan branching enzyme GlgB (754 aa).

Asp-431 acts as the Nucleophile in catalysis. Catalysis depends on Glu-484, which acts as the Proton donor.

It belongs to the glycosyl hydrolase 13 family. GlgB subfamily. As to quaternary structure, monomer.

It catalyses the reaction Transfers a segment of a (1-&gt;4)-alpha-D-glucan chain to a primary hydroxy group in a similar glucan chain.. It functions in the pathway glycan biosynthesis; glycogen biosynthesis. Its function is as follows. Catalyzes the formation of the alpha-1,6-glucosidic linkages in glycogen by scission of a 1,4-alpha-linked oligosaccharide from growing alpha-1,4-glucan chains and the subsequent attachment of the oligosaccharide to the alpha-1,6 position. This chain is 1,4-alpha-glucan branching enzyme GlgB, found in Prochlorococcus marinus subsp. pastoris (strain CCMP1986 / NIES-2087 / MED4).